The primary structure comprises 121 residues: MARRAGGARMFGSLLLFALLAAGVAPLSWDLPEPRSRASKIRVHSRGNLWATGHFMGKKSLEPSSPSPLGTAPHTSLRDQRLQLSHDLLGILLLKKALGVSLSRPAPQIQYRRLLVQILQK.

The signal sequence occupies residues 1–24 (MARRAGGARMFGSLLLFALLAAGV). Methionine amide is present on methionine 56. Residues 60-121 (SLEPSSPSPL…RRLLVQILQK (62 aa)) constitute a propeptide that is removed on maturation.

Belongs to the bombesin/neuromedin-B/ranatensin family.

Its subcellular location is the secreted. The protein localises to the cell projection. It localises to the neuron projection. Stimulates smooth muscle contraction. Induces sighing by acting directly on the pre-Botzinger complex, a cluster of several thousand neurons in the ventrolateral medulla responsible for inspiration during respiratory activity. Contributes to the induction of sneezing following exposure to chemical irritants or allergens which causes release of NMB by nasal sensory neurons and activation of NMBR-expressing neurons in the sneeze-evoking region of the brainstem. These in turn activate neurons of the caudal ventral respiratory group, giving rise to the sneezing response. Contributes to induction of acute itch, possibly through activation of the NMBR receptor on dorsal root ganglion neurons. Increases expression of NMBR and steroidogenic mediators STAR, CYP11A1 and HSD3B1 in Leydig cells, induces secretion of testosterone by Leydig cells and also promotes Leydig cell proliferation. Plays a role in the innate immune response to influenza A virus infection by enhancing interferon alpha expression and reducing expression of IL6. Plays a role in CSF1-induced proliferation of osteoclast precursors by contributing to the positive regulation of the expression of the CSF1 receptor CSF1R. The polypeptide is Neuromedin-B (NMB) (Homo sapiens (Human)).